A 220-amino-acid polypeptide reads, in one-letter code: tRNA (guanine-N(7)-)-methyltransferase (220 aa).

3 residues coordinate S-adenosyl-L-methionine: glutamate 42, glutamate 67, and aspartate 122. Aspartate 122 is a catalytic residue. Substrate contacts are provided by residues lysine 126, aspartate 158, and 198 to 201; that span reads TEYE.

This sequence belongs to the class I-like SAM-binding methyltransferase superfamily. TrmB family.

The catalysed reaction is guanosine(46) in tRNA + S-adenosyl-L-methionine = N(7)-methylguanosine(46) in tRNA + S-adenosyl-L-homocysteine. Its pathway is tRNA modification; N(7)-methylguanine-tRNA biosynthesis. Its function is as follows. Catalyzes the formation of N(7)-methylguanine at position 46 (m7G46) in tRNA. The chain is tRNA (guanine-N(7)-)-methyltransferase from Mycoplasma capricolum subsp. capricolum (strain California kid / ATCC 27343 / NCTC 10154).